A 512-amino-acid chain; its full sequence is GTPase Obg (512 aa).

In terms of domain architecture, Obg spans 2–159 (ATFVDTVTLH…GDVVLELKVV (158 aa)). In terms of domain architecture, OBG-type G spans 160–336 (ADVALVGYPS…LSFALAELVE (177 aa)). Residues 166-173 (GYPSAGKS), 191-195 (FTTLH), 212-215 (DVPG), 288-291 (NKID), and 317-319 (STV) each bind GTP. Serine 173 and threonine 193 together coordinate Mg(2+). One can recognise an OCT domain in the interval 355–439 (PRAVNEKPFT…GDGIVFDWEP (85 aa)). Residues 491–512 (GEAGLWADEDGTDEDASSDAKA) are disordered. Residues 497 to 512 (ADEDGTDEDASSDAKA) are compositionally biased toward acidic residues.

Belongs to the TRAFAC class OBG-HflX-like GTPase superfamily. OBG GTPase family. As to quaternary structure, monomer. The cofactor is Mg(2+).

It localises to the cytoplasm. Functionally, an essential GTPase which binds GTP, GDP and possibly (p)ppGpp with moderate affinity, with high nucleotide exchange rates and a fairly low GTP hydrolysis rate. Plays a role in control of the cell cycle, stress response, ribosome biogenesis and in those bacteria that undergo differentiation, in morphogenesis control. The protein is GTPase Obg of Clavibacter michiganensis subsp. michiganensis (strain NCPPB 382).